Here is a 49-residue protein sequence, read N- to C-terminus: Large ribosomal subunit protein bL33B (49 aa).

It belongs to the bacterial ribosomal protein bL33 family.

The protein is Large ribosomal subunit protein bL33B of Lactobacillus gasseri (strain ATCC 33323 / DSM 20243 / BCRC 14619 / CIP 102991 / JCM 1131 / KCTC 3163 / NCIMB 11718 / NCTC 13722 / AM63).